The chain runs to 447 residues: Asparagine--tRNA ligase (447 aa).

It belongs to the class-II aminoacyl-tRNA synthetase family. As to quaternary structure, homodimer.

The protein localises to the cytoplasm. It carries out the reaction tRNA(Asn) + L-asparagine + ATP = L-asparaginyl-tRNA(Asn) + AMP + diphosphate + H(+). The protein is Asparagine--tRNA ligase of Herpetosiphon aurantiacus (strain ATCC 23779 / DSM 785 / 114-95).